Here is a 262-residue protein sequence, read N- to C-terminus: Eukaryotic translation initiation factor 3 subunit G (262 aa).

The 79-residue stretch at 182–260 (NTCRVTNLPQ…MVLKVEWTRP (79 aa)) folds into the RRM domain.

It belongs to the eIF-3 subunit G family. Component of the eukaryotic translation initiation factor 3 (eIF-3) complex.

It localises to the cytoplasm. RNA-binding component of the eukaryotic translation initiation factor 3 (eIF-3) complex, which is involved in protein synthesis of a specialized repertoire of mRNAs and, together with other initiation factors, stimulates binding of mRNA and methionyl-tRNAi to the 40S ribosome. The eIF-3 complex specifically targets and initiates translation of a subset of mRNAs involved in cell proliferation. This subunit can bind 18S rRNA. Binds to GC-rich 5'UTRs in cholinergic motor neurons, thereby may play a role in translational regulation of mRNAs involved in neuropeptide signaling and stress response, including hlh-30 isoform d and ncs-2. This is Eukaryotic translation initiation factor 3 subunit G from Caenorhabditis elegans.